Reading from the N-terminus, the 235-residue chain is Protein GrpE (235 aa).

Residues 1–18 (MTDGNQKPDGNSGEQVTV) are compositionally biased toward polar residues. Disordered regions lie at residues 1 to 50 (MTDG…DAAH) and 198 to 235 (ESVD…PSGS). Residues 19-35 (TDKRRIDPETGEVRHVP) show a composition bias toward basic and acidic residues. Positions 215–235 (ADQGNSADTSGEQAESEPSGS) are enriched in polar residues.

This sequence belongs to the GrpE family. In terms of assembly, homodimer.

The protein resides in the cytoplasm. In terms of biological role, participates actively in the response to hyperosmotic and heat shock by preventing the aggregation of stress-denatured proteins, in association with DnaK and GrpE. It is the nucleotide exchange factor for DnaK and may function as a thermosensor. Unfolded proteins bind initially to DnaJ; upon interaction with the DnaJ-bound protein, DnaK hydrolyzes its bound ATP, resulting in the formation of a stable complex. GrpE releases ADP from DnaK; ATP binding to DnaK triggers the release of the substrate protein, thus completing the reaction cycle. Several rounds of ATP-dependent interactions between DnaJ, DnaK and GrpE are required for fully efficient folding. The protein is Protein GrpE of Mycobacterium tuberculosis (strain ATCC 25177 / H37Ra).